The sequence spans 534 residues: Blue-light-activated protein (534 aa).

Residues glycine 20–arginine 93 form the PAS domain. Cysteine 70 bears the S-4a-FMN cysteine mark. In terms of domain architecture, PAC spans asparagine 94–glutamine 148. In terms of domain architecture, Histidine kinase spans glycine 161–glutamate 390. Position 164 is a phosphohistidine; by autocatalysis (histidine 164). One can recognise a Response regulatory domain in the interval arginine 411–leucine 527. 4-aspartylphosphate is present on aspartate 461.

FMN binds covalently to cysteine after exposure to blue light and this bond is spontaneously broken in the dark.

The enzyme catalyses ATP + protein L-histidine = ADP + protein N-phospho-L-histidine.. Photosensitive kinase and response regulator that is involved in increased bacterial virulence upon exposure to light. This is Blue-light-activated protein from Pseudomonas syringae pv. tomato (strain ATCC BAA-871 / DC3000).